Here is a 149-residue protein sequence, read N- to C-terminus: Deoxyuridine 5'-triphosphate nucleotidohydrolase (149 aa).

Residues 68 to 70 (RSG), N81, 85 to 87 (LID), and M95 each bind substrate.

This sequence belongs to the dUTPase family. Mg(2+) is required as a cofactor.

The catalysed reaction is dUTP + H2O = dUMP + diphosphate + H(+). Its pathway is pyrimidine metabolism; dUMP biosynthesis; dUMP from dCTP (dUTP route): step 2/2. In terms of biological role, this enzyme is involved in nucleotide metabolism: it produces dUMP, the immediate precursor of thymidine nucleotides and it decreases the intracellular concentration of dUTP so that uracil cannot be incorporated into DNA. The polypeptide is Deoxyuridine 5'-triphosphate nucleotidohydrolase (Polynucleobacter necessarius subsp. necessarius (strain STIR1)).